We begin with the raw amino-acid sequence, 361 residues long: D-malate dehydrogenase [decarboxylating] (361 aa).

Mn(2+)-binding residues include aspartate 224, aspartate 248, and aspartate 252.

It belongs to the isocitrate and isopropylmalate dehydrogenases family. The cofactor is Mg(2+). Mn(2+) is required as a cofactor.

The protein localises to the cytoplasm. The catalysed reaction is (R)-malate + NAD(+) = pyruvate + CO2 + NADH. Its function is as follows. Catalyzes the NAD(+)-dependent oxidative decarboxylation of D-malate into pyruvate. Is essential for aerobic growth on D-malate as the sole carbon source. But is not required for anaerobic D-malate utilization, although DmlA is expressed and active in those conditions. Appears to be not able to use L-tartrate as a substrate for dehydrogenation instead of D-malate. This is D-malate dehydrogenase [decarboxylating] (dmlA) from Escherichia coli (strain K12).